The following is a 393-amino-acid chain: Potassium channel subfamily K member 4 (393 aa).

Residues 1–3 (MRS) lie on the Cytoplasmic side of the membrane. Residues 4–24 (TTLLALLALVLLYLVSGALVF) traverse the membrane as a helical segment. Over 25–87 (RALEQPHEQQ…NSTSNSSHSA (63 aa)) the chain is Extracellular. 2 N-linked (GlcNAc...) asparagine glycosylation sites follow: Asn78 and Asn82. An intramembrane region (helical) is located at residues 88-102 (WDLGSAFFFSGTIIT). Positions 103, 104, 105, and 106 each coordinate K(+). Positions 103–108 (TIGYGN) are selectivity filter 1. Residues 103 to 109 (TIGYGNV) lie within the membrane without spanning it. The Extracellular segment spans residues 110-117 (ALRTDAGR). A helical membrane pass occupies residues 118–150 (LFCIFYALVGIPLFGILLAGVGDRLGSSLRHGI). Residues 151–172 (GHIEAIFLKWHVPPELVRVLSA) lie on the Cytoplasmic side of the membrane. Residues 173 to 194 (MLFLLIGCLLFVLTPTFVFCYM) traverse the membrane as a helical segment. At 195–199 (EDWSK) the chain is on the extracellular side. The helical intramembrane region spans 200–213 (LEAIYFVIVTLTTV). Residues Thr212, Val213, Gly214, and Phe215 each contribute to the K(+) site. The selectivity filter 2 stretch occupies residues 212 to 217 (TVGFGD). Residues 214 to 219 (GFGDYV) lie within the membrane without spanning it. Residues 220 to 233 (AGADPRQDSPAYQP) are Extracellular-facing. A helical membrane pass occupies residues 234–260 (LVWFWILLGLAYFASVLTTIGNWLRVV). Residues 261-393 (SRRTRAEMGG…GRPRDKGVPV (133 aa)) are Cytoplasmic-facing. The disordered stretch occupies residues 285-393 (RVTQRAGPAA…GRPRDKGVPV (109 aa)). The span at 319-332 (SPSPPEKAQPPSPP) shows a compositional bias: pro residues. The segment covering 365–384 (PRGRRRPNPPRKPVRPRGPG) has biased composition (basic residues).

The protein belongs to the two pore domain potassium channel (TC 1.A.1.8) family. As to quaternary structure, homodimer; disulfide-linked. Forms heterodimers with other 2-pore domain K(+) channel subunits, such as KCNK2 and KCNK10. In terms of processing, N-glycosylated.

It is found in the cell membrane. Its subcellular location is the cell projection. The protein resides in the axon. The catalysed reaction is K(+)(in) = K(+)(out). The enzyme catalyses Rb(+)(in) = Rb(+)(out). It carries out the reaction Cs(+)(in) = Cs(+)(out). Activated by mechanical stretch and arachidonic acid. Functionally, k(+) channel that conducts voltage-dependent outward rectifying currents upon membrane depolarization. Voltage sensing is coupled to K(+) electrochemical gradient in an 'ion flux gating' mode where outward but not inward ion flow opens the gate. Converts to voltage-independent 'leak' conductance mode upon stimulation by various stimuli including mechanical membrane stretch, basic pH, heat and lipids. Homo- and heterodimerizes to form functional channels with distinct regulatory and gating properties. At trigeminal A-beta afferent nerves, the heterodimer of KCNK2/TREK-1 and KCNK4/TRAAK is mostly coexpressed at nodes of Ranvier where it conducts voltage-independent mechanosensitive and thermosensitive currents, allowing rapid action potential repolarization, high speed and high frequence saltatory conduction on myelinated nerves to ensure prompt sensory responses. Permeable to other monovalent cations such as Rb(+) and Cs(+). The sequence is that of Potassium channel subfamily K member 4 from Homo sapiens (Human).